A 448-amino-acid chain; its full sequence is Phosphoglucosamine mutase (448 aa).

The Phosphoserine intermediate role is filled by serine 100. Mg(2+) is bound by residues serine 100, aspartate 240, aspartate 242, and aspartate 244. Serine 100 carries the post-translational modification Phosphoserine.

This sequence belongs to the phosphohexose mutase family. Requires Mg(2+) as cofactor. In terms of processing, activated by phosphorylation.

It catalyses the reaction alpha-D-glucosamine 1-phosphate = D-glucosamine 6-phosphate. In terms of biological role, catalyzes the conversion of glucosamine-6-phosphate to glucosamine-1-phosphate. This chain is Phosphoglucosamine mutase, found in Bacillus anthracis (strain A0248).